Here is a 309-residue protein sequence, read N- to C-terminus: MEIILAEPRGFCAGVKRAVDILAITLKKYRNKRKVYVLHEIVHNKYIVEDFKRQGVIFVNSIRDIKDNRGILIFSAHGVSKNIEDKAKRKGIQVIDATCPLVSKVHKEAKRYEDSGKELILIGHKNHPEVKGIRGRVNNPIVLVQTLQNVRDLKVKNPDNLSYVTQTTLSTDDTREIITALKLRFPNITGPNLKDICYATQNRQNAVKKLTEIVDIVLIIGSKNSSNSNRLLDLCTARGKRAYLIDNYSYMDKSWLQGIEKIGITAGASAPDILVDELINHLKINVNTKVSVMSDGVTENVQFKIPHLV.

[4Fe-4S] cluster is bound at residue Cys12. (2E)-4-hydroxy-3-methylbut-2-enyl diphosphate-binding residues include His43 and His77. Dimethylallyl diphosphate is bound by residues His43 and His77. 2 residues coordinate isopentenyl diphosphate: His43 and His77. Cys99 serves as a coordination point for [4Fe-4S] cluster. (2E)-4-hydroxy-3-methylbut-2-enyl diphosphate is bound at residue His127. His127 is a dimethylallyl diphosphate binding site. Residue His127 participates in isopentenyl diphosphate binding. The active-site Proton donor is Glu129. Position 167 (Thr167) interacts with (2E)-4-hydroxy-3-methylbut-2-enyl diphosphate. Cys197 is a binding site for [4Fe-4S] cluster. The (2E)-4-hydroxy-3-methylbut-2-enyl diphosphate site is built by Ser225, Ser226, Asn227, and Ser269. The dimethylallyl diphosphate site is built by Ser225, Ser226, Asn227, and Ser269. The isopentenyl diphosphate site is built by Ser225, Ser226, Asn227, and Ser269.

Belongs to the IspH family. The cofactor is [4Fe-4S] cluster.

The catalysed reaction is isopentenyl diphosphate + 2 oxidized [2Fe-2S]-[ferredoxin] + H2O = (2E)-4-hydroxy-3-methylbut-2-enyl diphosphate + 2 reduced [2Fe-2S]-[ferredoxin] + 2 H(+). The enzyme catalyses dimethylallyl diphosphate + 2 oxidized [2Fe-2S]-[ferredoxin] + H2O = (2E)-4-hydroxy-3-methylbut-2-enyl diphosphate + 2 reduced [2Fe-2S]-[ferredoxin] + 2 H(+). Its pathway is isoprenoid biosynthesis; dimethylallyl diphosphate biosynthesis; dimethylallyl diphosphate from (2E)-4-hydroxy-3-methylbutenyl diphosphate: step 1/1. It participates in isoprenoid biosynthesis; isopentenyl diphosphate biosynthesis via DXP pathway; isopentenyl diphosphate from 1-deoxy-D-xylulose 5-phosphate: step 6/6. In terms of biological role, catalyzes the conversion of 1-hydroxy-2-methyl-2-(E)-butenyl 4-diphosphate (HMBPP) into a mixture of isopentenyl diphosphate (IPP) and dimethylallyl diphosphate (DMAPP). Acts in the terminal step of the DOXP/MEP pathway for isoprenoid precursor biosynthesis. The protein is 4-hydroxy-3-methylbut-2-enyl diphosphate reductase of Wolbachia sp. subsp. Brugia malayi (strain TRS).